The following is a 129-amino-acid chain: Ribosome-binding factor A (129 aa).

It belongs to the RbfA family. Monomer. Binds 30S ribosomal subunits, but not 50S ribosomal subunits or 70S ribosomes.

The protein resides in the cytoplasm. Its function is as follows. One of several proteins that assist in the late maturation steps of the functional core of the 30S ribosomal subunit. Associates with free 30S ribosomal subunits (but not with 30S subunits that are part of 70S ribosomes or polysomes). Required for efficient processing of 16S rRNA. May interact with the 5'-terminal helix region of 16S rRNA. This is Ribosome-binding factor A from Stutzerimonas stutzeri (strain A1501) (Pseudomonas stutzeri).